The primary structure comprises 330 residues: Flotillin-like protein FloA (330 aa).

The next 2 membrane-spanning stretches (helical) occupy residues 6–26 (LFLL…FTFV) and 28–48 (VMLW…TLIG).

It belongs to the flotillin-like FloA family. In terms of assembly, homooligomerizes.

It is found in the cell membrane. The protein resides in the membrane raft. Functionally, found in functional membrane microdomains (FMM) that may be equivalent to eukaryotic membrane rafts. FMMs are highly dynamic and increase in number as cells age. Flotillins are thought to be important factors in membrane fluidity. The polypeptide is Flotillin-like protein FloA (Bacillus licheniformis (strain ATCC 14580 / DSM 13 / JCM 2505 / CCUG 7422 / NBRC 12200 / NCIMB 9375 / NCTC 10341 / NRRL NRS-1264 / Gibson 46)).